A 407-amino-acid chain; its full sequence is Phospholipid-transporting ATPase accessory subunit CDC50 (407 aa).

Positions 1-33 (MAPRRRRGAGQDGSDDGRSDSDAPKNRPPNTAF) are disordered. At 1–48 (MAPRRRRGAGQDGSDDGRSDSDAPKNRPPNTAFRQQRMRAWQCVLTPK) the chain is on the cytoplasmic side. Basic and acidic residues predominate over residues 15-25 (DDGRSDSDAPK). The chain crosses the membrane as a helical span at residues 49–69 (LIVTVFSILAAIYLGFGAWLT). At 70 to 359 (YLAHTVRDLK…TMGSRNIWPG (290 aa)) the chain is on the extracellular side. Cys85 and Cys139 form a disulfide bridge. 2 N-linked (GlcNAc...) asparagine glycosylation sites follow: Asn131 and Asn189. A disulfide bridge links Cys193 with Cys210. Residues Asn219, Asn232, Asn241, and Asn314 are each glycosylated (N-linked (GlcNAc...) asparagine). The helical transmembrane segment at 360 to 380 (IIFLIVGGICLVLDIYFILSF) threads the bilayer. Residues 381-407 (FIWRPRKLGDPSYLSWNQPSAPGGHSS) are Cytoplasmic-facing.

Belongs to the CDC50/LEM3 family. As to quaternary structure, component of a flippase complex consisting of DNF1 and CDC50. Interacts with DNF1; the interaction is direct.

It localises to the cell membrane. Accessory component of a P4-ATPase flippase complex which catalyzes the hydrolysis of ATP coupled to the transport of phosphatidylcholine and phosphatidylserine from the lumen to the cytosolic leaflet of membranes and ensures the maintenance of asymmetric distribution of phospholipids. This Chaetomium thermophilum (strain DSM 1495 / CBS 144.50 / IMI 039719) (Thermochaetoides thermophila) protein is Phospholipid-transporting ATPase accessory subunit CDC50.